The primary structure comprises 474 residues: Glutathione synthetase (474 aa).

Residue alanine 2 is modified to N-acetylalanine. Residue arginine 125 coordinates substrate. Glutamate 144 contributes to the ATP binding site. Mg(2+)-binding residues include glutamate 144 and asparagine 146. Substrate contacts are provided by residues 148–151 (ISAS), 214–216 (ERN), glutamine 220, and 267–270 (RDGY). ATP contacts are provided by residues lysine 305, 364 to 373 (KPQREGGGNN), tyrosine 375, and 398 to 401 (MEKI). Position 368 (glutamate 368) interacts with Mg(2+). At serine 415 the chain carries Phosphoserine. ATP is bound at residue glutamate 425. Arginine 450 provides a ligand contact to substrate. Positions 452 and 458 each coordinate ATP. 461–462 (VA) is a binding site for substrate.

Belongs to the eukaryotic GSH synthase family. As to quaternary structure, homodimer. It depends on Mg(2+) as a cofactor.

The enzyme catalyses gamma-L-glutamyl-L-cysteine + glycine + ATP = glutathione + ADP + phosphate + H(+). It catalyses the reaction gamma-L-glutamyl-(2S)-2-aminobutanoate + glycine + ATP = ophthalmate + ADP + phosphate + H(+). It participates in sulfur metabolism; glutathione biosynthesis; glutathione from L-cysteine and L-glutamate: step 2/2. Functionally, catalyzes the production of glutathione from gamma-glutamylcysteine and glycine in an ATP-dependent manner. Glutathione (gamma-glutamylcysteinylglycine, GSH) is the most abundant intracellular thiol in living aerobic cells and is required for numerous processes including the protection of cells against oxidative damage, amino acid transport, the detoxification of foreign compounds, the maintenance of protein sulfhydryl groups in a reduced state and acts as a cofactor for a number of enzymes. Participates in ophthalmate biosynthesis in hepatocytes. The sequence is that of Glutathione synthetase from Mus musculus (Mouse).